We begin with the raw amino-acid sequence, 877 residues long: Phosphoenolpyruvate carboxylase (877 aa).

Residues histidine 138 and lysine 543 contribute to the active site.

The protein belongs to the PEPCase type 1 family. Mg(2+) is required as a cofactor.

It carries out the reaction oxaloacetate + phosphate = phosphoenolpyruvate + hydrogencarbonate. Its function is as follows. Forms oxaloacetate, a four-carbon dicarboxylic acid source for the tricarboxylic acid cycle. The polypeptide is Phosphoenolpyruvate carboxylase (Aeromonas hydrophila subsp. hydrophila (strain ATCC 7966 / DSM 30187 / BCRC 13018 / CCUG 14551 / JCM 1027 / KCTC 2358 / NCIMB 9240 / NCTC 8049)).